A 255-amino-acid chain; its full sequence is NAP1-related protein 2 (255 aa).

The stretch at 19-60 (IDAELVLSIEKLQEIQDDLEKINEKASDEVLEVEQKYNVIRK) forms a coiled coil. Residues 213 to 255 (NPLTYFNNDADEEDFDGDDDGDEEEKEGDSDEDDDEEDEVGEE) form a disordered region. Acidic residues predominate over residues 221-255 (DADEEDFDGDDDGDEEEKEGDSDEDDDEEDEVGEE).

Belongs to the nucleosome assembly protein (NAP) family. Can form homomeric and heteromeric protein complexes with NRP1. Binds histones H2A and H2B and associates with chromatin in vivo. In terms of tissue distribution, ubiquitous.

It is found in the cytoplasm. It localises to the nucleus. In terms of biological role, acts as a histone H2A/H2B chaperone in nucleosome assembly, playing a critical role for the correct expression of genes involved in root proliferation and patterning. Required with NRP1 for the maintenance of cell proliferation and differentiation in postembryonic root growth. Involved in both intramolecular and intermolecular somatic homologous recombination. The sequence is that of NAP1-related protein 2 (NRP2) from Arabidopsis thaliana (Mouse-ear cress).